Reading from the N-terminus, the 150-residue chain is Actin-depolymerizing factor 3 (150 aa).

The 144-residue stretch at 7–150 (GVAVSEECKA…TLDVLKDHTS (144 aa)) folds into the ADF-H domain.

This sequence belongs to the actin-binding proteins ADF family.

Actin-depolymerizing protein. Severs actin filaments (F-actin) and binds to actin monomers. The chain is Actin-depolymerizing factor 3 (ADF3) from Oryza sativa subsp. japonica (Rice).